Here is a 317-residue protein sequence, read N- to C-terminus: Acetyl-coenzyme A carboxylase carboxyl transferase subunit alpha (317 aa).

Residues 40–293 (LEKRSADALK…GDIITASLRS (254 aa)) form the CoA carboxyltransferase C-terminal domain.

It belongs to the AccA family. As to quaternary structure, acetyl-CoA carboxylase is a heterohexamer composed of biotin carboxyl carrier protein (AccB), biotin carboxylase (AccC) and two subunits each of ACCase subunit alpha (AccA) and ACCase subunit beta (AccD).

It is found in the cytoplasm. It catalyses the reaction N(6)-carboxybiotinyl-L-lysyl-[protein] + acetyl-CoA = N(6)-biotinyl-L-lysyl-[protein] + malonyl-CoA. Its pathway is lipid metabolism; malonyl-CoA biosynthesis; malonyl-CoA from acetyl-CoA: step 1/1. Component of the acetyl coenzyme A carboxylase (ACC) complex. First, biotin carboxylase catalyzes the carboxylation of biotin on its carrier protein (BCCP) and then the CO(2) group is transferred by the carboxyltransferase to acetyl-CoA to form malonyl-CoA. The protein is Acetyl-coenzyme A carboxylase carboxyl transferase subunit alpha of Brucella anthropi (strain ATCC 49188 / DSM 6882 / CCUG 24695 / JCM 21032 / LMG 3331 / NBRC 15819 / NCTC 12168 / Alc 37) (Ochrobactrum anthropi).